Here is a 160-residue protein sequence, read N- to C-terminus: Large ribosomal subunit protein uL11 (160 aa).

The protein belongs to the universal ribosomal protein uL11 family. In terms of assembly, part of the ribosomal stalk of the 50S ribosomal subunit. Interacts with L10 and the large rRNA to form the base of the stalk. L10 forms an elongated spine to which L12 dimers bind in a sequential fashion forming a multimeric L10(L12)X complex.

Functionally, forms part of the ribosomal stalk which helps the ribosome interact with GTP-bound translation factors. This is Large ribosomal subunit protein uL11 from Methanothermobacter thermautotrophicus (strain ATCC 29096 / DSM 1053 / JCM 10044 / NBRC 100330 / Delta H) (Methanobacterium thermoautotrophicum).